The following is a 227-amino-acid chain: 2-C-methyl-D-erythritol 4-phosphate cytidylyltransferase (227 aa).

Belongs to the IspD/TarI cytidylyltransferase family. IspD subfamily.

It carries out the reaction 2-C-methyl-D-erythritol 4-phosphate + CTP + H(+) = 4-CDP-2-C-methyl-D-erythritol + diphosphate. It participates in isoprenoid biosynthesis; isopentenyl diphosphate biosynthesis via DXP pathway; isopentenyl diphosphate from 1-deoxy-D-xylulose 5-phosphate: step 2/6. In terms of biological role, catalyzes the formation of 4-diphosphocytidyl-2-C-methyl-D-erythritol from CTP and 2-C-methyl-D-erythritol 4-phosphate (MEP). The polypeptide is 2-C-methyl-D-erythritol 4-phosphate cytidylyltransferase (Caldanaerobacter subterraneus subsp. tengcongensis (strain DSM 15242 / JCM 11007 / NBRC 100824 / MB4) (Thermoanaerobacter tengcongensis)).